Reading from the N-terminus, the 426-residue chain is Serine hydroxymethyltransferase (426 aa).

(6S)-5,6,7,8-tetrahydrofolate is bound by residues Leu118 and 122–124; that span reads GHL. Lys227 carries the N6-(pyridoxal phosphate)lysine modification.

This sequence belongs to the SHMT family. Homodimer. The cofactor is pyridoxal 5'-phosphate.

It localises to the cytoplasm. It carries out the reaction (6R)-5,10-methylene-5,6,7,8-tetrahydrofolate + glycine + H2O = (6S)-5,6,7,8-tetrahydrofolate + L-serine. It functions in the pathway one-carbon metabolism; tetrahydrofolate interconversion. Its pathway is amino-acid biosynthesis; glycine biosynthesis; glycine from L-serine: step 1/1. In terms of biological role, catalyzes the reversible interconversion of serine and glycine with tetrahydrofolate (THF) serving as the one-carbon carrier. This reaction serves as the major source of one-carbon groups required for the biosynthesis of purines, thymidylate, methionine, and other important biomolecules. Also exhibits THF-independent aldolase activity toward beta-hydroxyamino acids, producing glycine and aldehydes, via a retro-aldol mechanism. In Mycolicibacterium paratuberculosis (strain ATCC BAA-968 / K-10) (Mycobacterium paratuberculosis), this protein is Serine hydroxymethyltransferase.